Here is a 229-residue protein sequence, read N- to C-terminus: Putative N-acetylmannosamine-6-phosphate 2-epimerase (229 aa).

Belongs to the NanE family.

It catalyses the reaction an N-acyl-D-glucosamine 6-phosphate = an N-acyl-D-mannosamine 6-phosphate. Its pathway is amino-sugar metabolism; N-acetylneuraminate degradation; D-fructose 6-phosphate from N-acetylneuraminate: step 3/5. Converts N-acetylmannosamine-6-phosphate (ManNAc-6-P) to N-acetylglucosamine-6-phosphate (GlcNAc-6-P). The sequence is that of Putative N-acetylmannosamine-6-phosphate 2-epimerase from Cutibacterium acnes (strain DSM 16379 / KPA171202) (Propionibacterium acnes).